The sequence spans 356 residues: UDP-N-acetylglucosamine--N-acetylmuramyl-(pentapeptide) pyrophosphoryl-undecaprenol N-acetylglucosamine transferase (356 aa).

UDP-N-acetyl-alpha-D-glucosamine contacts are provided by Ser195 and Gln287.

It belongs to the glycosyltransferase 28 family. MurG subfamily.

The protein localises to the cell membrane. The catalysed reaction is Mur2Ac(oyl-L-Ala-gamma-D-Glu-L-Lys-D-Ala-D-Ala)-di-trans,octa-cis-undecaprenyl diphosphate + UDP-N-acetyl-alpha-D-glucosamine = beta-D-GlcNAc-(1-&gt;4)-Mur2Ac(oyl-L-Ala-gamma-D-Glu-L-Lys-D-Ala-D-Ala)-di-trans,octa-cis-undecaprenyl diphosphate + UDP + H(+). Its pathway is cell wall biogenesis; peptidoglycan biosynthesis. Functionally, cell wall formation. Catalyzes the transfer of a GlcNAc subunit on undecaprenyl-pyrophosphoryl-MurNAc-pentapeptide (lipid intermediate I) to form undecaprenyl-pyrophosphoryl-MurNAc-(pentapeptide)GlcNAc (lipid intermediate II). The chain is UDP-N-acetylglucosamine--N-acetylmuramyl-(pentapeptide) pyrophosphoryl-undecaprenol N-acetylglucosamine transferase from Streptococcus sanguinis (strain SK36).